Consider the following 43-residue polypeptide: Photosystem II reaction center protein Psb30 (43 aa).

Residues Val-15–Leu-35 traverse the membrane as a helical segment.

This sequence belongs to the Psb30/Ycf12 family. As to quaternary structure, PSII is composed of 1 copy each of membrane proteins PsbA, PsbB, PsbC, PsbD, PsbE, PsbF, PsbH, PsbI, PsbJ, PsbK, PsbL, PsbM, PsbT, PsbX, PsbY, PsbZ, Psb30/Ycf12, peripheral proteins PsbO, CyanoQ (PsbQ), PsbU, PsbV and a large number of cofactors. It forms dimeric complexes.

It is found in the cellular thylakoid membrane. Its function is as follows. A core subunit of photosystem II (PSII), probably helps stabilize the reaction center. The protein is Photosystem II reaction center protein Psb30 of Picosynechococcus sp. (strain ATCC 27264 / PCC 7002 / PR-6) (Agmenellum quadruplicatum).